We begin with the raw amino-acid sequence, 257 residues long: Triosephosphate isomerase, cytosolic (257 aa).

Substrate contacts are provided by N10 and K12. Catalysis depends on H96, which acts as the Electrophile. Residue E167 is the Proton acceptor of the active site.

It belongs to the triosephosphate isomerase family. Homodimer. In terms of tissue distribution, higher levels found in leaves than in roots.

Its subcellular location is the cytoplasm. It carries out the reaction D-glyceraldehyde 3-phosphate = dihydroxyacetone phosphate. Its pathway is carbohydrate biosynthesis; gluconeogenesis. It functions in the pathway carbohydrate degradation; glycolysis; D-glyceraldehyde 3-phosphate from glycerone phosphate: step 1/1. This Stellaria longipes (Longstalk starwort) protein is Triosephosphate isomerase, cytosolic (TPI).